The chain runs to 288 residues: Nucleotide-binding protein Neut_1559 (288 aa).

8–15 provides a ligand contact to ATP; that stretch reads GLSGSGKS. GTP is bound at residue 57 to 60; it reads DMRS.

It belongs to the RapZ-like family.

Displays ATPase and GTPase activities. In Nitrosomonas eutropha (strain DSM 101675 / C91 / Nm57), this protein is Nucleotide-binding protein Neut_1559.